Reading from the N-terminus, the 262-residue chain is Hydroxyethylthiazole kinase (262 aa).

Substrate is bound at residue M50. ATP contacts are provided by R125 and T171. Residue G198 participates in substrate binding.

This sequence belongs to the Thz kinase family. Mg(2+) is required as a cofactor.

The catalysed reaction is 5-(2-hydroxyethyl)-4-methylthiazole + ATP = 4-methyl-5-(2-phosphooxyethyl)-thiazole + ADP + H(+). Its pathway is cofactor biosynthesis; thiamine diphosphate biosynthesis; 4-methyl-5-(2-phosphoethyl)-thiazole from 5-(2-hydroxyethyl)-4-methylthiazole: step 1/1. In terms of biological role, catalyzes the phosphorylation of the hydroxyl group of 4-methyl-5-beta-hydroxyethylthiazole (THZ). This Escherichia coli (strain SMS-3-5 / SECEC) protein is Hydroxyethylthiazole kinase.